We begin with the raw amino-acid sequence, 423 residues long: Methionine aminopeptidase 2 (423 aa).

The segment covering 1 to 17 (MTDVIDAKPEEAKKVPP) has biased composition (basic and acidic residues). The segment at 1-89 (MTDVIDAKPE…IQPYKDDNAY (89 aa)) is disordered. Over residues 18-29 (EVEDEDSGDESA) the composition is skewed to acidic residues. The span at 41–54 (KKKKKKKKPKKKKK) shows a compositional bias: basic residues. A substrate-binding site is contributed by H176. A divalent metal cation contacts are provided by D196, D207, and H276. H284 provides a ligand contact to substrate. E309 and E404 together coordinate a divalent metal cation.

The protein belongs to the peptidase M24A family. Methionine aminopeptidase eukaryotic type 2 subfamily. Requires Co(2+) as cofactor. It depends on Zn(2+) as a cofactor. Mn(2+) serves as cofactor. The cofactor is Fe(2+).

It localises to the cytoplasm. It catalyses the reaction Release of N-terminal amino acids, preferentially methionine, from peptides and arylamides.. In terms of biological role, cotranslationally removes the N-terminal methionine from nascent proteins. The N-terminal methionine is often cleaved when the second residue in the primary sequence is small and uncharged (Met-Ala-, Cys, Gly, Pro, Ser, Thr, or Val). The polypeptide is Methionine aminopeptidase 2 (Schizophyllum commune (strain H4-8 / FGSC 9210) (Split gill fungus)).